Reading from the N-terminus, the 569-residue chain is GATOR1 complex protein NPRL3 (569 aa).

Disordered regions lie at residues 27–60 and 416–477; these read PFQR…EQDG and PSEE…GDSP. Composition is skewed to polar residues over residues 34–52 and 438–468; these read HPAS…SNTG and SLST…NSSA. Ser476 is subject to Phosphoserine.

The protein belongs to the NPR3 family. As to quaternary structure, within the GATOR complex, component of the GATOR1 subcomplex, made of DEPDC5, NPRL2 and NPRL3. GATOR1 mediates the strong interaction of the GATOR complex with small GTPases Rag (RagA/RRAGA, RagB/RRAGB, RagC/RRAGC and/or RagD/RRAGD) heterodimers. GATOR1 interacts with GPR155/LYCHOS; interaction takes place in presence of cholesterol and prevents interaction between GATOR1 and KICSTOR. In terms of tissue distribution, widely expressed. Expressed in the frontal lobe cortex as well as in the temporal, parietal, and occipital lobes.

It is found in the lysosome membrane. In terms of biological role, as a component of the GATOR1 complex functions as an inhibitor of the amino acid-sensing branch of the mTORC1 pathway. In response to amino acid depletion, the GATOR1 complex has GTPase activating protein (GAP) activity and strongly increases GTP hydrolysis by RagA/RRAGA (or RagB/RRAGB) within heterodimeric Rag complexes, thereby turning them into their inactive GDP-bound form, releasing mTORC1 from lysosomal surface and inhibiting mTORC1 signaling. In the presence of abundant amino acids, the GATOR1 complex is negatively regulated by GATOR2, the other GATOR subcomplex, in this amino acid-sensing branch of the TORC1 pathway. The protein is GATOR1 complex protein NPRL3 of Homo sapiens (Human).